The primary structure comprises 274 residues: Large ribosomal subunit protein uL2 (274 aa).

Positions 223–274 are disordered; that stretch reads VAMNPVDHPHGGGEGKTSGGRHPVSPWGVPTKGYKTRSNKRTDKFIVRRRAK.

The protein belongs to the universal ribosomal protein uL2 family. In terms of assembly, part of the 50S ribosomal subunit. Forms a bridge to the 30S subunit in the 70S ribosome.

Functionally, one of the primary rRNA binding proteins. Required for association of the 30S and 50S subunits to form the 70S ribosome, for tRNA binding and peptide bond formation. It has been suggested to have peptidyltransferase activity; this is somewhat controversial. Makes several contacts with the 16S rRNA in the 70S ribosome. The chain is Large ribosomal subunit protein uL2 from Colwellia psychrerythraea (strain 34H / ATCC BAA-681) (Vibrio psychroerythus).